The following is a 124-amino-acid chain: Large ribosomal subunit protein bL19 (124 aa).

Belongs to the bacterial ribosomal protein bL19 family.

This protein is located at the 30S-50S ribosomal subunit interface and may play a role in the structure and function of the aminoacyl-tRNA binding site. This Orientia tsutsugamushi (strain Boryong) (Rickettsia tsutsugamushi) protein is Large ribosomal subunit protein bL19.